A 505-amino-acid polypeptide reads, in one-letter code: MDLLLLEKSLIAVFVAVILATVISKLRGKKLKLPPGPIPIPIFGNWLQVGDDLNHRNLVDYAKKFGDLFLLRMGQRNLVVVSSPDLTKEVLLTQGVEFGSRTRNVVFDIFTGKGQDMVFTVYGEHWRKMRRIMTVPFFTNKVVQQNREGWEFEAASVVEDVKKNPDSATKGIVLRKRLQLMMYNNMFRIMFDRRFESEDDPLFLRLKALNGERSRLAQSFEYNYGDFIPILRPFLRGYLKICQDVKDRRIALFKKYFVDERKQIASSKPTGSEGLKCAIDHILEAEQKGEINEDNVLYIVENINVAAIETTLWSIEWGIAELVNHPEIQSKLRNELDTVLGPGVQVTEPDLHKLPYLQAVVKETLRLRMAIPLLVPHMNLHDAKLAGYDIPAESKILVNAWWLANNPNSWKKPEEFRPERFFEEESHVEANGNDFRYVPFGVGRRSCPGIILALPILGITIGRMVQNFELLPPPGQSKVDTSEKGGQFSLHILNHSIIVMKPRNC.

The helical transmembrane segment at leucine 3 to isoleucine 23 threads the bilayer. (E)-cinnamate is bound by residues arginine 213–glutamine 218 and alanine 306. A heme-binding site is contributed by cysteine 447.

Belongs to the cytochrome P450 family. Heme serves as cofactor. In terms of tissue distribution, expressed in roots, leaves, stems, flowers and siliques.

The protein resides in the membrane. The enzyme catalyses (E)-cinnamate + reduced [NADPH--hemoprotein reductase] + O2 = (E)-4-coumarate + oxidized [NADPH--hemoprotein reductase] + H2O + H(+). Its pathway is phenylpropanoid metabolism; trans-4-coumarate biosynthesis; trans-4-coumarate from trans-cinnamate: step 1/1. Its function is as follows. Catalyzes the first oxidative step of the phenylpropanoid pathway in higher plants by transforming trans-cinnamate into p-coumarate. The compounds formed by this pathway are essential components for lignification, pollination, and defense against ultraviolet light, predators and pathogens. This Arabidopsis thaliana (Mouse-ear cress) protein is Trans-cinnamate 4-monooxygenase.